Consider the following 531-residue polypeptide: Peptide chain release factor 3 (531 aa).

The tr-type G domain occupies 10 to 278 (RRRRTFAIIS…SLIDWAPAPK (269 aa)). Residues 19–26 (SHPDAGKT), 87–91 (DTPGH), and 141–144 (NKYD) contribute to the GTP site.

The protein belongs to the TRAFAC class translation factor GTPase superfamily. Classic translation factor GTPase family. PrfC subfamily.

Its subcellular location is the cytoplasm. Increases the formation of ribosomal termination complexes and stimulates activities of RF-1 and RF-2. It binds guanine nucleotides and has strong preference for UGA stop codons. It may interact directly with the ribosome. The stimulation of RF-1 and RF-2 is significantly reduced by GTP and GDP, but not by GMP. The protein is Peptide chain release factor 3 of Neisseria meningitidis serogroup C / serotype 2a (strain ATCC 700532 / DSM 15464 / FAM18).